We begin with the raw amino-acid sequence, 207 residues long: Thymidylate kinase (207 aa).

12–19 serves as a coordination point for ATP; that stretch reads GVDGAGKS.

This sequence belongs to the thymidylate kinase family.

The enzyme catalyses dTMP + ATP = dTDP + ADP. Functionally, phosphorylation of dTMP to form dTDP in both de novo and salvage pathways of dTTP synthesis. The sequence is that of Thymidylate kinase from Bordetella petrii (strain ATCC BAA-461 / DSM 12804 / CCUG 43448).